The primary structure comprises 56 residues: Protein translocase subunit SecE (56 aa).

The chain crosses the membrane as a helical span at residues 30–50; it reads VFWLVLFVSIFLGIVDYLMFL.

This sequence belongs to the SecE/SEC61-gamma family. In terms of assembly, component of the Sec protein translocase complex. Heterotrimer consisting of SecY, SecE and SecG subunits. The heterotrimers can form oligomers, although 1 heterotrimer is thought to be able to translocate proteins. Interacts with the ribosome. Interacts with SecDF, and other proteins may be involved. Interacts with SecA.

The protein resides in the cell inner membrane. Its function is as follows. Essential subunit of the Sec protein translocation channel SecYEG. Clamps together the 2 halves of SecY. May contact the channel plug during translocation. In Borreliella burgdorferi (strain ATCC 35210 / DSM 4680 / CIP 102532 / B31) (Borrelia burgdorferi), this protein is Protein translocase subunit SecE.